Here is a 691-residue protein sequence, read N- to C-terminus: Elongation factor G (691 aa).

The tr-type G domain occupies 8–283 (EDYRNFGIMA…AVVDYLPSPI (276 aa)). Residues 17 to 24 (AHIDAGKT), 81 to 85 (DTPGH), and 135 to 138 (NKMD) contribute to the GTP site.

The protein belongs to the TRAFAC class translation factor GTPase superfamily. Classic translation factor GTPase family. EF-G/EF-2 subfamily.

Its subcellular location is the cytoplasm. In terms of biological role, catalyzes the GTP-dependent ribosomal translocation step during translation elongation. During this step, the ribosome changes from the pre-translocational (PRE) to the post-translocational (POST) state as the newly formed A-site-bound peptidyl-tRNA and P-site-bound deacylated tRNA move to the P and E sites, respectively. Catalyzes the coordinated movement of the two tRNA molecules, the mRNA and conformational changes in the ribosome. This chain is Elongation factor G, found in Methylocella silvestris (strain DSM 15510 / CIP 108128 / LMG 27833 / NCIMB 13906 / BL2).